The chain runs to 333 residues: tRNA-dihydrouridine(16) synthase (333 aa).

Residues 19–21 (PMQ) and glutamine 80 contribute to the FMN site. Cysteine 110 acts as the Proton donor in catalysis. Residues lysine 151, 211–213 (NGD), and 235–236 (GR) each bind FMN.

Belongs to the Dus family. DusC subfamily. The cofactor is FMN.

The enzyme catalyses 5,6-dihydrouridine(16) in tRNA + NADP(+) = uridine(16) in tRNA + NADPH + H(+). It catalyses the reaction 5,6-dihydrouridine(16) in tRNA + NAD(+) = uridine(16) in tRNA + NADH + H(+). Catalyzes the synthesis of 5,6-dihydrouridine (D), a modified base found in the D-loop of most tRNAs, via the reduction of the C5-C6 double bond in target uridines. Specifically modifies U16 in tRNAs. In Neisseria meningitidis serogroup B (strain ATCC BAA-335 / MC58), this protein is tRNA-dihydrouridine(16) synthase.